Reading from the N-terminus, the 69-residue chain is Large ribosomal subunit protein bL28 (69 aa).

Belongs to the bacterial ribosomal protein bL28 family.

The sequence is that of Large ribosomal subunit protein bL28 from Aquifex aeolicus (strain VF5).